The following is a 573-amino-acid chain: Proline--tRNA ligase (573 aa).

It belongs to the class-II aminoacyl-tRNA synthetase family. ProS type 1 subfamily. In terms of assembly, homodimer.

The protein localises to the cytoplasm. It carries out the reaction tRNA(Pro) + L-proline + ATP = L-prolyl-tRNA(Pro) + AMP + diphosphate. Catalyzes the attachment of proline to tRNA(Pro) in a two-step reaction: proline is first activated by ATP to form Pro-AMP and then transferred to the acceptor end of tRNA(Pro). As ProRS can inadvertently accommodate and process non-cognate amino acids such as alanine and cysteine, to avoid such errors it has two additional distinct editing activities against alanine. One activity is designated as 'pretransfer' editing and involves the tRNA(Pro)-independent hydrolysis of activated Ala-AMP. The other activity is designated 'posttransfer' editing and involves deacylation of mischarged Ala-tRNA(Pro). The misacylated Cys-tRNA(Pro) is not edited by ProRS. This chain is Proline--tRNA ligase, found in Cupriavidus taiwanensis (strain DSM 17343 / BCRC 17206 / CCUG 44338 / CIP 107171 / LMG 19424 / R1) (Ralstonia taiwanensis (strain LMG 19424)).